A 581-amino-acid chain; its full sequence is uncharacterized protein (581 aa).

The first 28 residues, 1–28, serve as a signal peptide directing secretion; sequence MDSKAVSPLIGFVLMLAIIMGLIGIMQA.

This is an uncharacterized protein from Archaeoglobus fulgidus (strain ATCC 49558 / DSM 4304 / JCM 9628 / NBRC 100126 / VC-16).